Consider the following 115-residue polypeptide: UPF0125 protein VP0646 (115 aa).

The tract at residues 92–115 (RAEQAKAAGNADPVTGGKPNALRK) is disordered.

Belongs to the UPF0125 (RnfH) family.

This Vibrio parahaemolyticus serotype O3:K6 (strain RIMD 2210633) protein is UPF0125 protein VP0646.